A 292-amino-acid chain; its full sequence is NAD kinase (292 aa).

The active-site Proton acceptor is the D73. Residues 73–74, 147–148, H158, R175, D177, 188–193, and Q247 each bind NAD(+); these read DG, NE, and TGYSLS.

It belongs to the NAD kinase family. The cofactor is a divalent metal cation.

It is found in the cytoplasm. The catalysed reaction is NAD(+) + ATP = ADP + NADP(+) + H(+). Involved in the regulation of the intracellular balance of NAD and NADP, and is a key enzyme in the biosynthesis of NADP. Catalyzes specifically the phosphorylation on 2'-hydroxyl of the adenosine moiety of NAD to yield NADP. This is NAD kinase from Buchnera aphidicola subsp. Acyrthosiphon pisum (strain 5A).